The sequence spans 443 residues: Ribosomal protein uS12 methylthiotransferase RimO (443 aa).

In terms of domain architecture, MTTase N-terminal spans proline 8 to proline 118. 6 residues coordinate [4Fe-4S] cluster: cysteine 17, cysteine 53, cysteine 82, cysteine 150, cysteine 154, and cysteine 157. One can recognise a Radical SAM core domain in the interval leucine 136–glutamate 373. Positions glutamine 376–glutamate 442 constitute a TRAM domain.

This sequence belongs to the methylthiotransferase family. RimO subfamily. [4Fe-4S] cluster is required as a cofactor.

Its subcellular location is the cytoplasm. The catalysed reaction is L-aspartate(89)-[ribosomal protein uS12]-hydrogen + (sulfur carrier)-SH + AH2 + 2 S-adenosyl-L-methionine = 3-methylsulfanyl-L-aspartate(89)-[ribosomal protein uS12]-hydrogen + (sulfur carrier)-H + 5'-deoxyadenosine + L-methionine + A + S-adenosyl-L-homocysteine + 2 H(+). Its function is as follows. Catalyzes the methylthiolation of an aspartic acid residue of ribosomal protein uS12. The protein is Ribosomal protein uS12 methylthiotransferase RimO of Proteus mirabilis (strain HI4320).